Here is a 393-residue protein sequence, read N- to C-terminus: Bifunctional enzyme Fae/Hps (393 aa).

The formaldehyde-activating enzyme stretch occupies residues 1–161; sequence MYLVGEALIG…YEKDRAAHGI (161 aa). His-17 functions as the Proton donor in the catalytic mechanism. Positions 19, 48, 66, 68, and 83 each coordinate substrate. Residues 162-393 form a 3-hexulose-6-phosphate synthase region; that stretch reads MGFKVQRLWD…IDQFRIMTDF (232 aa).

The protein in the N-terminal section; belongs to the formaldehyde-activating enzyme family. It in the C-terminal section; belongs to the HPS/KGPDC family. HPS subfamily.

It carries out the reaction 5,6,7,8-tetrahydromethanopterin + formaldehyde = 5,10-methylenetetrahydromethanopterin + H2O. The catalysed reaction is D-ribulose 5-phosphate + formaldehyde = D-arabino-hex-3-ulose 6-phosphate. The protein operates within carbohydrate biosynthesis; D-ribose 5-phosphate biosynthesis. Functionally, catalyzes the condensation of formaldehyde with tetrahydromethanopterin (H(4)MPT) to 5,10-methylenetetrahydromethanopterin. Catalyzes the reversible formation of ribulose-5-phosphate and formaldehyde from 3-hexulose-6-phosphate. This Methanoregula boonei (strain DSM 21154 / JCM 14090 / 6A8) protein is Bifunctional enzyme Fae/Hps.